A 136-amino-acid polypeptide reads, in one-letter code: Histone H2B (136 aa).

The span at 1 to 10 (MPPKAADKKP) shows a compositional bias: basic and acidic residues. Positions 1–44 (MPPKAADKKPAAKAPVASKAPEKKDAGKKTASTGEKKKRTKARR) are disordered. N6-acetyllysine; alternate occurs at positions 8 and 9. Glycyl lysine isopeptide (Lys-Gly) (interchain with G-Cter in SUMO); alternate cross-links involve residues Lys-8 and Lys-9. Lys-13 is subject to N6-acetyllysine. An N6-acetyllysine; alternate modification is found at Lys-23. A Glycyl lysine isopeptide (Lys-Gly) (interchain with G-Cter in SUMO); alternate cross-link involves residue Lys-23. A Glycyl lysine isopeptide (Lys-Gly) (interchain with G-Cter in SUMO) cross-link involves residue Lys-24. Lys-130 is covalently cross-linked (Glycyl lysine isopeptide (Lys-Gly) (interchain with G-Cter in ubiquitin)).

It belongs to the histone H2B family. In terms of assembly, the nucleosome is a histone octamer containing two molecules each of H2A, H2B, H3 and H4 assembled in one H3-H4 heterotetramer and two H2A-H2B heterodimers. The octamer wraps approximately 147 bp of DNA. In terms of processing, monoubiquitinated to form H2BK123ub1. H2BK123ub1 gives a specific tag for epigenetic transcriptional activation and is also prerequisite for H3K4me and H3K79me formation. H2BK123ub1 also modulates the formation of double-strand breaks during meiosis and is a prerequisite for DNA-damage checkpoint activation. Post-translationally, acetylated by GCN5 to form H2BK11ac and H2BK16ac. H2BK16ac can also be formed by ESA1. Acetylation of N-terminal lysines and particularly formation of H2BK11acK16ac has a positive effect on transcription. Sumoylation to form H2BK6su or H2BK7su, and probably also H2BK16su or H2BK17su, occurs preferentially near the telomeres and represses gene transcription.

Its subcellular location is the nucleus. It localises to the chromosome. Core component of nucleosome. Nucleosomes wrap and compact DNA into chromatin, limiting DNA accessibility to the cellular machineries which require DNA as a template. Histones thereby play a central role in transcription regulation, DNA repair, DNA replication and chromosomal stability. DNA accessibility is regulated via a complex set of post-translational modifications of histones, also called histone code, and nucleosome remodeling. The chain is Histone H2B (hh2b) from Rosellinia necatrix (White root-rot fungus).